The primary structure comprises 222 residues: Large ribosomal subunit protein uL1 (222 aa).

Belongs to the universal ribosomal protein uL1 family. As to quaternary structure, part of the 50S ribosomal subunit.

Its function is as follows. Binds directly to 23S rRNA. Probably involved in E site tRNA release. In terms of biological role, protein L1 is also a translational repressor protein, it controls the translation of its operon by binding to its mRNA. This Pyrobaculum calidifontis (strain DSM 21063 / JCM 11548 / VA1) protein is Large ribosomal subunit protein uL1.